The following is a 210-amino-acid chain: Mitochondrial cardiolipin hydrolase (210 aa).

Residues 1–6 (MLLWGR) lie on the Mitochondrial intermembrane side of the membrane. Residues 7–24 (WKVVAGLAGLALSLELLL) form a helical membrane-spanning segment. Topologically, residues 25–210 (RYMRRRKPIR…YDFFPEKENK (186 aa)) are cytoplasmic. The PLD phosphodiesterase domain maps to 138-165 (SSGYMHHKFAVVDGTVVLTGSLNWTVQA). Catalysis depends on residues histidine 143, lysine 145, and aspartate 150.

The protein belongs to the phospholipase D family. MitoPLD/Zucchini subfamily. Homodimer.

It is found in the mitochondrion outer membrane. The catalysed reaction is a cardiolipin + H2O = a 1,2-diacyl-sn-glycero-3-phospho-(1'-sn-glycerol) + a 1,2-diacyl-sn-glycero-3-phosphate + H(+). In terms of biological role, presents phospholipase and nuclease activities, depending on the different physiological conditions. Plays a key role in mitochondrial fusion and fission via its phospholipase activity. In its phospholipase role, it uses the mitochondrial lipid cardiolipin as substrate to generate phosphatidate (PA or 1,2-diacyl-sn-glycero-3-phosphate), a second messenger signaling lipid. Production of PA facilitates Mitofusin-mediated fusion, whereas the cleavage of PA by the Lipin family of phosphatases produces diacylgycerol (DAG) which promotes mitochondrial fission. Regulates mitochondrial shape through facilitating mitochondrial fusion. During spermatogenesis, plays a critical role in PIWI-interacting RNA (piRNA) biogenesis. piRNAs provide essential protection against the activity of mobile genetic elements. piRNA-mediated transposon silencing is thus critical for maintaining genome stability, in particular in germline cells when transposons are mobilized as a consequence of wide-spread genomic demethylation. Has been shown to be a backbone-non-specific, single strand-specific nuclease, cleaving either RNA or DNA substrates with similar affinity. Produces 5' phosphate and 3' hydroxyl termini, suggesting it could directly participate in the processing of primary piRNA transcripts. Has been proposed to act as a cardiolipin hydrolase to generate phosphatidic acid at mitochondrial surface. Although it cannot be excluded that it can act as a phospholipase in some circumstances, this activity could not be confirmed. The protein is Mitochondrial cardiolipin hydrolase (pld6) of Xenopus tropicalis (Western clawed frog).